The primary structure comprises 69 residues: Large ribosomal subunit protein uL30 (69 aa).

The protein belongs to the universal ribosomal protein uL30 family. In terms of assembly, part of the 50S ribosomal subunit.

The chain is Large ribosomal subunit protein uL30 from Rhizobium etli (strain ATCC 51251 / DSM 11541 / JCM 21823 / NBRC 15573 / CFN 42).